A 438-amino-acid polypeptide reads, in one-letter code: 26S proteasome regulatory subunit 7 homolog (438 aa).

A compositionally biased stretch (basic and acidic residues) spans 1–15; the sequence is MPPKEDWEKYQKPVD. Positions 1–31 are disordered; that stretch reads MPPKEDWEKYQKPVDTEEENDKNPPPLDEGD. Ser-90 is modified (phosphoserine). 220–227 serves as a coordination point for ATP; that stretch reads GPPGTGKT.

Belongs to the AAA ATPase family.

Its subcellular location is the cytoplasm. The protein localises to the nucleus. The 26S proteasome is involved in the ATP-dependent degradation of ubiquitinated proteins. The regulatory (or ATPase) complex confers ATP dependency and substrate specificity to the 26S complex. The polypeptide is 26S proteasome regulatory subunit 7 homolog (rpt1) (Schizosaccharomyces pombe (strain 972 / ATCC 24843) (Fission yeast)).